Here is a 387-residue protein sequence, read N- to C-terminus: Carboxyaminopropylagmatine decarboxylase (387 aa).

The residue at position 52 (lysine 52) is an N6-(pyridoxal phosphate)lysine.

Belongs to the Orn/Lys/Arg decarboxylase class-II family. It depends on pyridoxal 5'-phosphate as a cofactor.

The catalysed reaction is N(1)-[(S)-3-amino-3-carboxypropyl]agmatine + H(+) = N(1)-(3-aminopropyl)agmatine + CO2. Its pathway is amine and polyamine biosynthesis; spermidine biosynthesis. In terms of biological role, decarboxylase involved in the biosynthesis of spermidine via the carboxyaminopropylagmatine (CAPA) pathway. Catalyzes the decarboxylation of CAPA to form aminopropylagmatine (APA). Can also decarboxylate carboxyspermidine and carboxynorspermidine, but not ornithine, arginine, lysine and meso-diaminopimelate. This is Carboxyaminopropylagmatine decarboxylase from Synechocystis sp. (strain ATCC 27184 / PCC 6803 / Kazusa).